A 428-amino-acid chain; its full sequence is UDP-N-acetylglucosamine 1-carboxyvinyltransferase (428 aa).

25 to 26 contributes to the phosphoenolpyruvate binding site; sequence KN. Position 102 (Arg102) interacts with UDP-N-acetyl-alpha-D-glucosamine. The active-site Proton donor is Cys126. Cys126 carries the 2-(S-cysteinyl)pyruvic acid O-phosphothioketal modification. Asp316 and Val338 together coordinate UDP-N-acetyl-alpha-D-glucosamine.

This sequence belongs to the EPSP synthase family. MurA subfamily.

It localises to the cytoplasm. It catalyses the reaction phosphoenolpyruvate + UDP-N-acetyl-alpha-D-glucosamine = UDP-N-acetyl-3-O-(1-carboxyvinyl)-alpha-D-glucosamine + phosphate. It functions in the pathway cell wall biogenesis; peptidoglycan biosynthesis. Functionally, cell wall formation. Adds enolpyruvyl to UDP-N-acetylglucosamine. The chain is UDP-N-acetylglucosamine 1-carboxyvinyltransferase from Anaplasma marginale (strain Florida).